The chain runs to 1131 residues: Chitin synthase 1 (1131 aa).

Positions 1–20 (MSDQNNRSRNEYHSNRKNEP) are enriched in basic and acidic residues. The interval 1-22 (MSDQNNRSRNEYHSNRKNEPSY) is disordered. Phosphoserine is present on residues S34, S35, S270, S299, and S318. Residues 282-305 (YLHDDSRPVNDGKEELDSVKSGYS) form a disordered region. At T328 the chain carries Phosphothreonine. S358 is modified (phosphoserine). The next 7 membrane-spanning stretches (helical) occupy residues 795-815 (FFYL…FFLV), 833-853 (VLSV…FILS), 866-886 (VLTC…SIFM), 914-934 (IVIS…IYLQ), 942-962 (FIQY…YAFC), 1042-1062 (LVII…LETG), and 1101-1121 (ILWL…IYMI).

Belongs to the chitin synthase family.

The protein localises to the cell membrane. The catalysed reaction is [(1-&gt;4)-N-acetyl-beta-D-glucosaminyl](n) + UDP-N-acetyl-alpha-D-glucosamine = [(1-&gt;4)-N-acetyl-beta-D-glucosaminyl](n+1) + UDP + H(+). Requires proteolytic activation. Polymerizes chitin, a structural polymer of the cell wall and septum, by transferring the sugar moiety of UDP-GlcNAc to the non-reducing end of the growing chitin polymer. Required for mitotic division septum formation during adverse conditions. This is Chitin synthase 1 (CHS1) from Saccharomyces cerevisiae (strain ATCC 204508 / S288c) (Baker's yeast).